The chain runs to 215 residues: MDIKVVNHPLVRARLTIMRDARSNNVVFRDALADLGAMLIYEASNDLETESFDVETPVSTAEGHRLKNPPIIVPIIRAGLGMIDPALSMIPDAQVGFIGLARDEKTHEPVPYLEALPDDLSGQPVMLVDPMLATGGSLLNAVELLVEHGADDITCVCMVSAQPGVDKLVNSGLPVRKLVTATIDPALDENAYIDPGLGDAGDRLYGPRNIDLESR.

Residues arginine 77, arginine 102, and 129–137 (DPMLATGGS) contribute to the 5-phospho-alpha-D-ribose 1-diphosphate site. Uracil is bound by residues isoleucine 193 and 198-200 (GDA). Residue aspartate 199 coordinates 5-phospho-alpha-D-ribose 1-diphosphate.

Belongs to the UPRTase family. Requires Mg(2+) as cofactor.

The catalysed reaction is UMP + diphosphate = 5-phospho-alpha-D-ribose 1-diphosphate + uracil. Its pathway is pyrimidine metabolism; UMP biosynthesis via salvage pathway; UMP from uracil: step 1/1. Allosterically activated by GTP. In terms of biological role, catalyzes the conversion of uracil and 5-phospho-alpha-D-ribose 1-diphosphate (PRPP) to UMP and diphosphate. This is Uracil phosphoribosyltransferase from Corynebacterium urealyticum (strain ATCC 43042 / DSM 7109).